The chain runs to 94 residues: uncharacterized protein (94 aa).

This is an uncharacterized protein from Treponema pallidum (strain Nichols).